Reading from the N-terminus, the 249-residue chain is Green-light absorbing proteorhodopsin (249 aa).

The first 17 residues, 1–17, serve as a signal peptide directing secretion; the sequence is MKLLLILGSVIALPTFA. A run of 7 helical transmembrane segments spans residues 30–49, 62–84, 99–121, 128–147, 151–168, 189–211, and 221–243; these read GVSF…FFFV, LTVS…GVWI, LLTV…NVAG, LVGS…GIMA, AFII…ELWA, MMYI…YLMG, and LIYN…NVAV. At Lys-231 the chain carries N6-(retinylidene)lysine.

It belongs to the archaeal/bacterial/fungal opsin family. Contains one covalently linked retinal chromophore.

It localises to the cell membrane. Functionally, light-driven proton pump that generates photothrophic energy. The polypeptide is Green-light absorbing proteorhodopsin (Gamma-proteobacterium EBAC31A08).